Consider the following 535-residue polypeptide: uncharacterized protein (535 aa).

6 disordered regions span residues 1 to 58 (MSMK…PRGP), 211 to 254 (EPPK…PPCI), 313 to 353 (RRVA…EQVK), 376 to 416 (RPDK…DQRL), 421 to 440 (QGLD…DAAW), and 508 to 535 (SLFE…SRRD). The span at 22–34 (IRRDPWFGGRDNE) shows a compositional bias: basic and acidic residues. An SNW region spans residues 179–342 (AQYIRYTPSQ…KARQERSAMR (164 aa)). Basic and acidic residues predominate over residues 376 to 393 (RPDKADKLRKERERDISE). Basic and acidic residues predominate over residues 511–535 (EHTKEKKRGGDGGDSRGESKRSRRD).

Belongs to the SNW family.

This is an uncharacterized protein from Caenorhabditis elegans.